Here is a 102-residue protein sequence, read N- to C-terminus: MNSQNIRIRLKAFDHRILDASTREIVSTAKRTGANVRGPIPLPTRIEKFTVNRGPHIDKKSREQFEMRTHKRLLDIVDPTPQTVDALMKLDLSAGVDVEIKL.

It belongs to the universal ribosomal protein uS10 family. As to quaternary structure, part of the 30S ribosomal subunit.

Its function is as follows. Involved in the binding of tRNA to the ribosomes. This chain is Small ribosomal subunit protein uS10, found in Bartonella henselae (strain ATCC 49882 / DSM 28221 / CCUG 30454 / Houston 1) (Rochalimaea henselae).